A 649-amino-acid polypeptide reads, in one-letter code: Threonine--tRNA ligase (649 aa).

The TGS domain occupies 1 to 60 (MHVVLPDGKQLELPMGATALDAASAIGPRLAQDALAATANGELVDLMTPLPDGASITLIT). The segment at 248-544 (DHRKLGRELE…LIEHYAGDFP (297 aa)) is catalytic. 3 residues coordinate Zn(2+): Cys341, His392, and His521.

It belongs to the class-II aminoacyl-tRNA synthetase family. Homodimer. Requires Zn(2+) as cofactor.

The protein localises to the cytoplasm. The enzyme catalyses tRNA(Thr) + L-threonine + ATP = L-threonyl-tRNA(Thr) + AMP + diphosphate + H(+). In terms of biological role, catalyzes the attachment of threonine to tRNA(Thr) in a two-step reaction: L-threonine is first activated by ATP to form Thr-AMP and then transferred to the acceptor end of tRNA(Thr). Also edits incorrectly charged L-seryl-tRNA(Thr). This chain is Threonine--tRNA ligase, found in Deinococcus deserti (strain DSM 17065 / CIP 109153 / LMG 22923 / VCD115).